The chain runs to 294 residues: Ribosomal RNA small subunit methyltransferase H (294 aa).

S-adenosyl-L-methionine is bound by residues 37 to 39 (GGH), Asp-58, Leu-93, Asp-105, and Gln-112.

This sequence belongs to the methyltransferase superfamily. RsmH family.

It localises to the cytoplasm. It catalyses the reaction cytidine(1402) in 16S rRNA + S-adenosyl-L-methionine = N(4)-methylcytidine(1402) in 16S rRNA + S-adenosyl-L-homocysteine + H(+). Its function is as follows. Specifically methylates the N4 position of cytidine in position 1402 (C1402) of 16S rRNA. This is Ribosomal RNA small subunit methyltransferase H from Fervidobacterium nodosum (strain ATCC 35602 / DSM 5306 / Rt17-B1).